We begin with the raw amino-acid sequence, 178 residues long: Transcription antitermination protein NusB (178 aa).

It belongs to the NusB family.

In terms of biological role, involved in transcription antitermination. Required for transcription of ribosomal RNA (rRNA) genes. Binds specifically to the boxA antiterminator sequence of the ribosomal RNA (rrn) operons. The polypeptide is Transcription antitermination protein NusB (Alkalilimnicola ehrlichii (strain ATCC BAA-1101 / DSM 17681 / MLHE-1)).